The following is a 159-amino-acid chain: Succinate dehydrogenase [ubiquinone] cytochrome b small subunit, mitochondrial (159 aa).

Residues 1–56 (MAVLWRLSAVCGALGGRALLLRTPVVRPAHISAFLQDRPIPEWCGVQHIHLSPSHH) constitute a mitochondrion transit peptide. Over 57–63 (SGSKAAS) the chain is Mitochondrial matrix. The helical transmembrane segment at 64 to 85 (LHWTSERVVSVLLLGLLPAAYL) threads the bilayer. At 86–90 (NPCSA) the chain is on the mitochondrial intermembrane side. The helical transmembrane segment at 91 to 111 (MDYSLAAALTLHGHWGLGQVV) threads the bilayer. A heme b-binding site is contributed by His102. Over 112-122 (TDYVHGDALQK) the chain is Mitochondrial matrix. Tyr114 contacts a ubiquinone. Residues 123–144 (AAKAGLLALSALTFAGLCYFNY) form a helical membrane-spanning segment. Residues 145–159 (HDVGICKAVAMLWKL) are Mitochondrial intermembrane-facing.

It belongs to the CybS family. In terms of assembly, component of complex II composed of four subunits: the flavoprotein (FP) SDHA, iron-sulfur protein (IP) SDHB, and a cytochrome b560 composed of SDHC and SDHD.

The protein resides in the mitochondrion inner membrane. Its pathway is carbohydrate metabolism; tricarboxylic acid cycle. Functionally, membrane-anchoring subunit of succinate dehydrogenase (SDH) that is involved in complex II of the mitochondrial electron transport chain and is responsible for transferring electrons from succinate to ubiquinone (coenzyme Q). SDH also oxidizes malate to the non-canonical enol form of oxaloacetate, enol-oxaloacetate. Enol-oxaloacetate, which is a potent inhibitor of the succinate dehydrogenase activity, is further isomerized into keto-oxaloacetate. This is Succinate dehydrogenase [ubiquinone] cytochrome b small subunit, mitochondrial (SDHD) from Homo sapiens (Human).